The following is a 340-amino-acid chain: 7,8-didemethyl-8-hydroxy-5-deazariboflavin synthase (340 aa).

The 232-residue stretch at 25 to 256 (ATYSPAYTIV…SDITIQIPPN (232 aa)) folds into the Radical SAM core domain. Cysteine 39, cysteine 43, and cysteine 46 together coordinate [4Fe-4S] cluster.

Belongs to the radical SAM superfamily. CofG family. As to quaternary structure, consists of two subunits, CofG and CofH. Requires [4Fe-4S] cluster as cofactor.

It catalyses the reaction 5-amino-5-(4-hydroxybenzyl)-6-(D-ribitylimino)-5,6-dihydrouracil + S-adenosyl-L-methionine = 7,8-didemethyl-8-hydroxy-5-deazariboflavin + 5'-deoxyadenosine + L-methionine + NH4(+) + H(+). The protein operates within cofactor biosynthesis; coenzyme F0 biosynthesis. Its function is as follows. Catalyzes the radical-mediated synthesis of 7,8-didemethyl-8-hydroxy-5-deazariboflavin from 5-amino-5-(4-hydroxybenzyl)-6-(D-ribitylimino)-5,6-dihydrouracil. The polypeptide is 7,8-didemethyl-8-hydroxy-5-deazariboflavin synthase (Trichormus variabilis (strain ATCC 29413 / PCC 7937) (Anabaena variabilis)).